The primary structure comprises 535 residues: Ankyrin repeat domain-containing protein 34C (535 aa).

4 ANK repeats span residues 10 to 39 (TDGN…YINE), 43 to 80 (KGET…DPNI), 84 to 114 (SGKT…DPSL), and 118 to 147 (TGAS…AKGK). Disordered regions lie at residues 159-181 (SGTK…DRHS) and 214-237 (AGHP…RKVS). Positions 216-225 (HPSSCNTSKA) are enriched in polar residues. Position 301 is a phosphoserine (serine 301). The disordered stretch occupies residues 381 to 444 (DLDIQPGPDP…RRRPPHLLER (64 aa)). Serine 447 is modified (phosphoserine).

The protein belongs to the ANKRD34 family.

In Homo sapiens (Human), this protein is Ankyrin repeat domain-containing protein 34C (ANKRD34C).